The following is a 468-amino-acid chain: ATP synthase subunit beta (468 aa).

Gly155–Thr162 contacts ATP.

It belongs to the ATPase alpha/beta chains family. F-type ATPases have 2 components, CF(1) - the catalytic core - and CF(0) - the membrane proton channel. CF(1) has five subunits: alpha(3), beta(3), gamma(1), delta(1), epsilon(1). CF(0) has three main subunits: a(1), b(2) and c(9-12). The alpha and beta chains form an alternating ring which encloses part of the gamma chain. CF(1) is attached to CF(0) by a central stalk formed by the gamma and epsilon chains, while a peripheral stalk is formed by the delta and b chains.

The protein resides in the cell membrane. The enzyme catalyses ATP + H2O + 4 H(+)(in) = ADP + phosphate + 5 H(+)(out). In terms of biological role, produces ATP from ADP in the presence of a proton gradient across the membrane. The catalytic sites are hosted primarily by the beta subunits. In Streptococcus pneumoniae serotype 19F (strain G54), this protein is ATP synthase subunit beta.